The following is a 278-amino-acid chain: Poly(3-hydroxyoctanoate) depolymerase (278 aa).

Positions 1 to 33 (MPLRTLLCGLLLAVCLGQHALAASRCSERPRTL) are cleaved as a signal peptide.

The protein resides in the secreted. It carries out the reaction Hydrolyzes the polyester poly{oxycarbonyl[(R)-2-pentylethylene]} to oligomers.. In terms of biological role, hydrolysis of poly(3-hydroxyoctanoic acid). The sequence is that of Poly(3-hydroxyoctanoate) depolymerase (phaZ) from Pseudomonas fluorescens.